Reading from the N-terminus, the 457-residue chain is Cell division protein FtsA (457 aa).

It belongs to the FtsA/MreB family. Self-interacts. Interacts with FtsZ.

Its subcellular location is the cell membrane. Its function is as follows. Cell division protein that is involved in the assembly of the Z ring. May serve as a membrane anchor for the Z ring. Increased expression restores growth to a PBP2b (penA) deletion strain as well as mreCD and rodA deletions, but not gpsB or rodZ deletions. Does not restore wild-type cell morphology to the penA deletion. The sequence is that of Cell division protein FtsA from Streptococcus pneumoniae serotype 2 (strain D39 / NCTC 7466).